We begin with the raw amino-acid sequence, 581 residues long: Proline--tRNA ligase (581 aa).

This sequence belongs to the class-II aminoacyl-tRNA synthetase family. ProS type 1 subfamily. In terms of assembly, homodimer.

Its subcellular location is the cytoplasm. The enzyme catalyses tRNA(Pro) + L-proline + ATP = L-prolyl-tRNA(Pro) + AMP + diphosphate. Its function is as follows. Catalyzes the attachment of proline to tRNA(Pro) in a two-step reaction: proline is first activated by ATP to form Pro-AMP and then transferred to the acceptor end of tRNA(Pro). As ProRS can inadvertently accommodate and process non-cognate amino acids such as alanine and cysteine, to avoid such errors it has two additional distinct editing activities against alanine. One activity is designated as 'pretransfer' editing and involves the tRNA(Pro)-independent hydrolysis of activated Ala-AMP. The other activity is designated 'posttransfer' editing and involves deacylation of mischarged Ala-tRNA(Pro). The misacylated Cys-tRNA(Pro) is not edited by ProRS. This is Proline--tRNA ligase from Kosmotoga olearia (strain ATCC BAA-1733 / DSM 21960 / TBF 19.5.1).